The chain runs to 470 residues: Putative ankyrin repeat protein L279 (470 aa).

ANK repeat units follow at residues 119–148 (RDDY…NPGT), 149–178 (NKYA…GSDK), 372–401 (ETQG…NVNE), and 403–431 (NGKP…DISL).

The chain is Putative ankyrin repeat protein L279 from Acanthamoeba polyphaga (Amoeba).